Here is a 464-residue protein sequence, read N- to C-terminus: ATP-dependent protease ATPase subunit HslU (464 aa).

ATP is bound by residues isoleucine 19, 61-66, aspartate 277, glutamate 342, and arginine 414; that span reads GVGKTE.

This sequence belongs to the ClpX chaperone family. HslU subfamily. A double ring-shaped homohexamer of HslV is capped on each side by a ring-shaped HslU homohexamer. The assembly of the HslU/HslV complex is dependent on binding of ATP.

The protein localises to the cytoplasm. Functionally, ATPase subunit of a proteasome-like degradation complex; this subunit has chaperone activity. The binding of ATP and its subsequent hydrolysis by HslU are essential for unfolding of protein substrates subsequently hydrolyzed by HslV. HslU recognizes the N-terminal part of its protein substrates and unfolds these before they are guided to HslV for hydrolysis. The chain is ATP-dependent protease ATPase subunit HslU from Lactobacillus johnsonii (strain CNCM I-12250 / La1 / NCC 533).